The sequence spans 169 residues: Transcription antitermination protein NusB (169 aa).

A disordered region spans residues A150 to S169.

Belongs to the NusB family.

Its function is as follows. Involved in transcription antitermination. Required for transcription of ribosomal RNA (rRNA) genes. Binds specifically to the boxA antiterminator sequence of the ribosomal RNA (rrn) operons. The polypeptide is Transcription antitermination protein NusB (Rhodococcus jostii (strain RHA1)).